We begin with the raw amino-acid sequence, 226 residues long: MSVVSNTSLEHALREGANALGLDLSEAQITQLLDFLALLQKWNKVYNLTAVRDPQEMLTHHLLDSLAAVPPLRRHVARRGQGGAIHLGARLLDVGSGGGLPGVVFAICCPEVDVSCVDTVAKKAAFIQQAAGTLGLSNLHGIHARVETLAGPFDVVSCRAFAALADFTAWSRQALAPHGVWLAMKGKHPHDEIAALPADVSVFHVEQLTVPGLQAERCILWLRPVA.

S-adenosyl-L-methionine is bound by residues G95, L100, 146–147 (VE), and R159.

It belongs to the methyltransferase superfamily. RNA methyltransferase RsmG family.

The protein localises to the cytoplasm. The enzyme catalyses guanosine(527) in 16S rRNA + S-adenosyl-L-methionine = N(7)-methylguanosine(527) in 16S rRNA + S-adenosyl-L-homocysteine. Its function is as follows. Specifically methylates the N7 position of guanine in position 527 of 16S rRNA. This Acidovorax ebreus (strain TPSY) (Diaphorobacter sp. (strain TPSY)) protein is Ribosomal RNA small subunit methyltransferase G.